The sequence spans 209 residues: Glycolipid transfer protein B (209 aa).

Tandem repeats lie at residues 45-55 (IKADITGNITK) and 56-66 (IRSVYESNPTQ). The interval 45–66 (IKADITGNITKIRSVYESNPTQ) is 2 X 12 AA approximate tandem repeats. Beta-D-galactosyl-(1-&gt;4)-beta-D-glucosyl-(1&lt;-&gt;1)-N-[(9Z)-octadecenoyl]-sphing-4-enine is bound at residue 48 to 55 (DITGNITK). 2 residues coordinate beta-D-galactosyl-(1-&gt;4)-beta-D-glucosyl-(1&lt;-&gt;1)-N-[(9Z)-octadecenoyl]-sphing-4-enine: histidine 140 and tyrosine 207.

Belongs to the GLTP family.

Its subcellular location is the cytoplasm. Accelerates the intermembrane transfer of various glycolipids. Catalyzes the transfer of various glycosphingolipids between membranes but does not catalyze the transfer of phospholipids. May be involved in the intracellular translocation of glucosylceramides. This is Glycolipid transfer protein B (gltp-b) from Xenopus laevis (African clawed frog).